We begin with the raw amino-acid sequence, 361 residues long: MQTLADLLNTIPAIDPAAMSRAQRHIDGLLKPVGSLGRLEALAIQLAGMPGLNGIPHVGKKAVLVMCADHGVWEEGVAISPKEVTAIQAENMTRGTTGVCVLAAQAGANVHVVDVGIDSAEPIPGLINMRVARGSGNIASAPAMSRRQAEKLLLDVICYTRELAKNGVTLFGVGELGMANTTPAAAAAIVSTITGRDPEEVVGIGANLPTDKLANKIDVVRRAITLNQPNPQDGVDVLAKVGGFDLVGMAGVMLGAASCGLPVLLDGFLSYAAALAACQMSPAIKPYLIPSHLSAEKGARIALSHLGLEPYLNMEMRLGEGSGAALAMPIIEAACAIYNNMGELAASNIVLPGNTTSDLNS.

The active-site Proton acceptor is the glutamate 320.

This sequence belongs to the CobT family. Homodimer.

It catalyses the reaction 5,6-dimethylbenzimidazole + nicotinate beta-D-ribonucleotide = alpha-ribazole 5'-phosphate + nicotinate + H(+). It participates in nucleoside biosynthesis; alpha-ribazole biosynthesis; alpha-ribazole from 5,6-dimethylbenzimidazole: step 1/2. In terms of biological role, catalyzes the synthesis of alpha-ribazole-5'-phosphate from nicotinate mononucleotide (NAMN) and 5,6-dimethylbenzimidazole (DMB). The sequence is that of Nicotinate-nucleotide--dimethylbenzimidazole phosphoribosyltransferase from Shigella boydii serotype 18 (strain CDC 3083-94 / BS512).